A 183-amino-acid chain; its full sequence is Transmembrane and coiled-coil domain-containing protein 2 (183 aa).

Residues 54 to 74 (VQIILGISFLTLLAIGLFALW) traverse the membrane as a helical segment. A coiled-coil region spans residues 127–150 (GLQEKILKKLQMVENKVRDLEGII).

Its subcellular location is the membrane. The sequence is that of Transmembrane and coiled-coil domain-containing protein 2 (Tmco2) from Mus musculus (Mouse).